The sequence spans 431 residues: MSKIVKVIGREIIDSRGNPTVEAEVHLEGGFVGLAAAPSGASTGSREALELRDGDKSRFLGKGVLKAVAAVNGPIAQAVLGKDAKDQANIDKIMIDLDGTENKSQFGANAILAVSLAAAKAAAASKGMPLYEHIAELNGTPGKFSMPLPMMNIINGGEHADNNVDIQEFMIQPVGAKSLKEAVRIGSEVFHHLAKVLKAKGLNTAVGDEGGYAPNLGSNAEALAVIAEAVKAAGYELGKDVTLAMDCAASEFYKDGKYVLAGEGNKAFTSEEFTHFLEDLTKQYPIVSIEDGLDESDWDGFAYQTKVLGDKIQLVGDDLFVTNTKILKEGIEKGIANSILIKFNQIGSLTETLAAIKMAKDAGYTAVISHRSGETEDATIADLAVGTAAGQIKTGSMSRSDRVAKYNQLIRIEEALGSRAPFNGLKEVKGQ.

Residue Q167 participates in (2R)-2-phosphoglycerate binding. The active-site Proton donor is E209. Mg(2+) contacts are provided by D246, E290, and D317. (2R)-2-phosphoglycerate contacts are provided by K342, R371, S372, and K393. Catalysis depends on K342, which acts as the Proton acceptor.

Belongs to the enolase family. As to quaternary structure, component of the RNA degradosome, a multiprotein complex involved in RNA processing and mRNA degradation. Mg(2+) serves as cofactor.

It localises to the cytoplasm. Its subcellular location is the secreted. The protein resides in the cell surface. It catalyses the reaction (2R)-2-phosphoglycerate = phosphoenolpyruvate + H2O. It participates in carbohydrate degradation; glycolysis; pyruvate from D-glyceraldehyde 3-phosphate: step 4/5. Functionally, catalyzes the reversible conversion of 2-phosphoglycerate (2-PG) into phosphoenolpyruvate (PEP). It is essential for the degradation of carbohydrates via glycolysis. The chain is Enolase from Serratia proteamaculans (strain 568).